The primary structure comprises 175 residues: Nucleoside-triphosphatase THEP1 (175 aa).

ATP is bound by residues 8 to 15 (GSPGVGKS) and 99 to 106 (LVVIDEIG).

The protein belongs to the THEP1 NTPase family.

It carries out the reaction a ribonucleoside 5'-triphosphate + H2O = a ribonucleoside 5'-diphosphate + phosphate + H(+). Has nucleotide phosphatase activity towards ATP, GTP, CTP, TTP and UTP. May hydrolyze nucleoside diphosphates with lower efficiency. The protein is Nucleoside-triphosphatase THEP1 of Methanosarcina acetivorans (strain ATCC 35395 / DSM 2834 / JCM 12185 / C2A).